The chain runs to 503 residues: D-alanine--D-alanyl carrier protein ligase (503 aa).

151 to 152 provides a ligand contact to ATP; it reads TS. Asp196 is a binding site for D-alanine. 291-296 contributes to the ATP binding site; that stretch reads NTYGPT. Val300 provides a ligand contact to D-alanine. ATP-binding positions include Asp382, 393-396, and Lys491; that span reads YNGR. Lys491 provides a ligand contact to D-alanine.

Belongs to the ATP-dependent AMP-binding enzyme family. DltA subfamily.

The protein localises to the cytoplasm. The catalysed reaction is holo-[D-alanyl-carrier protein] + D-alanine + ATP = D-alanyl-[D-alanyl-carrier protein] + AMP + diphosphate. It functions in the pathway cell wall biogenesis; lipoteichoic acid biosynthesis. Functionally, catalyzes the first step in the D-alanylation of lipoteichoic acid (LTA), the activation of D-alanine and its transfer onto the D-alanyl carrier protein (Dcp) DltC. In an ATP-dependent two-step reaction, forms a high energy D-alanyl-AMP intermediate, followed by transfer of the D-alanyl residue as a thiol ester to the phosphopantheinyl prosthetic group of the Dcp. D-alanylation of LTA plays an important role in modulating the properties of the cell wall in Gram-positive bacteria, influencing the net charge of the cell wall. This Bacillus anthracis (strain A0248) protein is D-alanine--D-alanyl carrier protein ligase.